The sequence spans 387 residues: F-box protein DOR (387 aa).

Residues 19–64 (DENFEPIPIDLVIEIFSRSPVKSIARCRCVSKLWASILRLPYFTEL) form the F-box domain.

As to quaternary structure, part of a SCF (ASK-cullin-F-box) protein ligase complex. Interacts with ASK14 and CUL1. As to expression, strongly expressed in guard cells. Mostly represented in seedlings, leaves and flowers, and, to a lower extent, in roots and siliques.

The protein operates within protein modification; protein ubiquitination. Its function is as follows. Component of SCF(ASK-cullin-F-box) E3 ubiquitin ligase complexes, which may mediate the ubiquitination and subsequent proteasomal degradation of target proteins. Negative regulator of guard cell abscisic acid (ABA) signaling, especially during drought stress. The chain is F-box protein DOR (DOR) from Arabidopsis thaliana (Mouse-ear cress).